A 430-amino-acid polypeptide reads, in one-letter code: Mitochondrial distribution and morphology protein 10 (430 aa).

Over residues 215–234 (SSSAMNPPSGTSASETNGSG) the composition is skewed to polar residues. 2 disordered regions span residues 215 to 237 (SSSA…GPSV) and 339 to 393 (LGAN…GPKE).

It belongs to the MDM10 family. In terms of assembly, component of the ER-mitochondria encounter structure (ERMES) or MDM complex, composed of MMM1, MDM10, MDM12 and MDM34. Associates with the mitochondrial outer membrane sorting assembly machinery SAM(core) complex.

It localises to the mitochondrion outer membrane. Functionally, component of the ERMES/MDM complex, which serves as a molecular tether to connect the endoplasmic reticulum and mitochondria. Components of this complex are involved in the control of mitochondrial shape and protein biogenesis and may function in phospholipid exchange. MDM10 is involved in the late assembly steps of the general translocase of the mitochondrial outer membrane (TOM complex). Functions in the TOM40-specific route of the assembly of outer membrane beta-barrel proteins, including the association of TOM40 with the receptor TOM22 and small TOM proteins. Can associate with the SAM(core) complex as well as the MDM12-MMM1 complex, both involved in late steps of the major beta-barrel assembly pathway, that is responsible for biogenesis of all outer membrane beta-barrel proteins. May act as a switch that shuttles between both complexes and channels precursor proteins into the TOM40-specific pathway. Plays a role in mitochondrial morphology and in the inheritance of mitochondria. The protein is Mitochondrial distribution and morphology protein 10 of Chaetomium globosum (strain ATCC 6205 / CBS 148.51 / DSM 1962 / NBRC 6347 / NRRL 1970) (Soil fungus).